The chain runs to 520 residues: Target of rapamycin complex 2 subunit MAPKAP1 (520 aa).

The region spanning 139–267 (QSILSVRLEQ…GFSTLALVEK (129 aa)) is the CRIM domain. An SIN1-type RBD region spans residues 279–353 (LFVRINAAHG…QNSLEFCLVR (75 aa)). Residues 310–333 (KRRKGSQRNSGPQYRLEKQSQPNV) form a disordered region. The SIN1-type PH domain occupies 382-487 (QYKSFKVSMI…IVLKVNYILE (106 aa)). 3 residues coordinate a 1,2-diacyl-sn-glycero-3-phospho-(1D-myo-inositol-3,4,5-trisphosphate): R393, K428, and K464.

The protein belongs to the SIN1 family. Component of the mechanistic target of rapamycin complex 2 (mTORC2), consisting in two heterotretramers composed of MTOR, MLST8, RICTOR and MAPKAP1/SIN1. Contrary to mTORC1, mTORC2 does not bind to and is not sensitive to FKBP12-rapamycin.

The protein localises to the cell membrane. It is found in the endoplasmic reticulum membrane. Its subcellular location is the early endosome membrane. The protein resides in the late endosome membrane. It localises to the lysosome membrane. The protein localises to the golgi apparatus membrane. It is found in the mitochondrion outer membrane. Its subcellular location is the cytoplasm. The protein resides in the perinuclear region. It localises to the nucleus. Its activity is regulated as follows. Phosphatidylinositol 3,4,5-trisphosphate (PI(3,4,5)P3) promotes MTOR activation by relieving MAPKAP1/SIN1-mediated inhibition of MTOR that takes place in absence of PI(3,4,5)P3. Component of the mechanistic target of rapamycin complex 2 (mTORC2), which transduces signals from growth factors to pathways involved in proliferation, cytoskeletal organization, lipogenesis and anabolic output. In response to growth factors, mTORC2 phosphorylates and activates AGC protein kinase family members, including AKT (AKT1, AKT2 and AKT3), PKC (PRKCA, PRKCB and PRKCE) and SGK1. In contrast to mTORC1, mTORC2 is nutrient-insensitive. Within the mTORC2 complex, MAPKAP1/SIN1 acts as a substrate adapter which recognizes and binds AGC protein kinase family members for phosphorylation by MTOR. The protein is Target of rapamycin complex 2 subunit MAPKAP1 (mapkap1) of Xenopus tropicalis (Western clawed frog).